We begin with the raw amino-acid sequence, 578 residues long: Proline--tRNA ligase (578 aa).

It belongs to the class-II aminoacyl-tRNA synthetase family. ProS type 1 subfamily. Homodimer.

It localises to the cytoplasm. It catalyses the reaction tRNA(Pro) + L-proline + ATP = L-prolyl-tRNA(Pro) + AMP + diphosphate. Functionally, catalyzes the attachment of proline to tRNA(Pro) in a two-step reaction: proline is first activated by ATP to form Pro-AMP and then transferred to the acceptor end of tRNA(Pro). As ProRS can inadvertently accommodate and process non-cognate amino acids such as alanine and cysteine, to avoid such errors it has two additional distinct editing activities against alanine. One activity is designated as 'pretransfer' editing and involves the tRNA(Pro)-independent hydrolysis of activated Ala-AMP. The other activity is designated 'posttransfer' editing and involves deacylation of mischarged Ala-tRNA(Pro). The misacylated Cys-tRNA(Pro) is not edited by ProRS. This chain is Proline--tRNA ligase, found in Burkholderia lata (strain ATCC 17760 / DSM 23089 / LMG 22485 / NCIMB 9086 / R18194 / 383).